The sequence spans 361 residues: Cysteine-rich with EGF-like domain protein 2-A (361 aa).

The signal sequence occupies residues Met-1–Ala-24. Positions Asp-134 to Leu-176 constitute an EGF-like 1 domain. Intrachain disulfides connect Cys-138–Cys-152, Cys-146–Cys-164, and Cys-166–Cys-175. N-linked (GlcNAc...) asparagine glycosylation is present at Asn-188. 2 FU repeats span residues Tyr-191–Pro-238 and Ser-251–Val-298. The EGF-like 2; calcium-binding domain maps to Asp-288–Val-329. 3 disulfides stabilise this stretch: Cys-292–Cys-306, Cys-299–Cys-315, and Cys-317–Cys-328. N-linked (GlcNAc...) asparagine glycosylation occurs at Asn-303. The tract at residues Asp-341–Leu-361 is disordered. Residues Thr-346–Leu-361 are compositionally biased toward polar residues. Asn-352 is a glycosylation site (N-linked (GlcNAc...) asparagine).

Belongs to the CRELD family.

The protein resides in the secreted. Its subcellular location is the endoplasmic reticulum. Possible role in neuronal acetylcholine receptor transport. This chain is Cysteine-rich with EGF-like domain protein 2-A (creld2-a), found in Xenopus laevis (African clawed frog).